The primary structure comprises 271 residues: 5-deoxy-glucuronate isomerase (271 aa).

It belongs to the isomerase IolB family.

The catalysed reaction is 5-deoxy-D-glucuronate = 5-dehydro-2-deoxy-D-gluconate. Its pathway is polyol metabolism; myo-inositol degradation into acetyl-CoA; acetyl-CoA from myo-inositol: step 4/7. In terms of biological role, involved in the isomerization of 5-deoxy-glucuronate (5DG) to 5-dehydro-2-deoxy-D-gluconate (DKG or 2-deoxy-5-keto-D-gluconate). The chain is 5-deoxy-glucuronate isomerase from Lacticaseibacillus casei (Lactobacillus casei).